A 219-amino-acid polypeptide reads, in one-letter code: Cytidylate kinase (219 aa).

11-19 (GTAGSGKTA) contacts ATP.

It belongs to the cytidylate kinase family. Type 1 subfamily.

The protein localises to the cytoplasm. The catalysed reaction is CMP + ATP = CDP + ADP. It catalyses the reaction dCMP + ATP = dCDP + ADP. This chain is Cytidylate kinase, found in Mesoplasma florum (strain ATCC 33453 / NBRC 100688 / NCTC 11704 / L1) (Acholeplasma florum).